The following is a 188-amino-acid chain: mRNA transport factor GFD1 (188 aa).

The tract at residues 1–128 (MPLESIWADA…KTQSKQDTAS (128 aa)) is disordered. The span at 18–28 (KQKPSHKRSNN) shows a compositional bias: basic residues. The segment covering 29-44 (NKKNNNSRWSNESSSN) has biased composition (low complexity). Positions 59 to 79 (GNHESKTKNKIKETLPREKKP) are enriched in basic and acidic residues. A phosphoserine mark is found at serine 87, serine 106, and serine 111. The span at 112–128 (PSKMKTTKTQSKQDTAS) shows a compositional bias: low complexity. The stretch at 119 to 164 (KTQSKQDTASKMKLLKKKIEEQREILQKTHHKNQQQQVLMDFLNDE) forms a coiled coil.

As to quaternary structure, interacts with GLE1, NUP42, NAB2, ZDS1 and probably DBP5. Forms a complex with GLE1 and NAB2.

It localises to the cytoplasm. It is found in the nucleus. The protein localises to the nuclear pore complex. Its subcellular location is the nucleus membrane. High-copy suppressor of mutant alleles of ATP-dependent RNA helicase DBP5, which is involved in mRNA export from the nucleus. It may also play an important role in a late stage of NAB2-mRNA export. This Saccharomyces cerevisiae (strain ATCC 204508 / S288c) (Baker's yeast) protein is mRNA transport factor GFD1 (GFD1).